A 418-amino-acid chain; its full sequence is Histidine--tRNA ligase (418 aa).

This sequence belongs to the class-II aminoacyl-tRNA synthetase family. Homodimer.

The protein localises to the cytoplasm. It carries out the reaction tRNA(His) + L-histidine + ATP = L-histidyl-tRNA(His) + AMP + diphosphate + H(+). This is Histidine--tRNA ligase from Thermosipho africanus (strain TCF52B).